Here is a 450-residue protein sequence, read N- to C-terminus: Phosphoglucosamine mutase (450 aa).

The active-site Phosphoserine intermediate is Ser-97. Positions 97, 236, 238, and 240 each coordinate Mg(2+). At Ser-97 the chain carries Phosphoserine.

The protein belongs to the phosphohexose mutase family. Mg(2+) serves as cofactor. Post-translationally, activated by phosphorylation.

The enzyme catalyses alpha-D-glucosamine 1-phosphate = D-glucosamine 6-phosphate. Catalyzes the conversion of glucosamine-6-phosphate to glucosamine-1-phosphate. In Prochlorococcus marinus (strain MIT 9312), this protein is Phosphoglucosamine mutase.